Reading from the N-terminus, the 175-residue chain is Myosin regulatory light chain 2, atrial isoform (175 aa).

At A2 the chain carries N-acetylalanine. Residues S22 and S23 each carry the phosphoserine modification. 3 EF-hand domains span residues 32 to 67 (AQIQ…LGKV), 102 to 137 (DPEE…QADK), and 138 to 173 (FSPA…GDEK). Ca(2+) contacts are provided by D45, N47, D49, and D56.

As to quaternary structure, myosin is a hexamer of 2 heavy chains and 4 light chains.

This is Myosin regulatory light chain 2, atrial isoform (MYL7) from Sus scrofa (Pig).